A 393-amino-acid chain; its full sequence is Flap endonuclease 1 (393 aa).

Residues 1-108 form an N-domain region; that stretch reads MGILGLSKLL…SELQERRQRA (108 aa). Residue Asp34 participates in Mg(2+) binding. Residue Arg74 participates in DNA binding. 5 residues coordinate Mg(2+): Asp90, Glu162, Glu164, Asp183, and Asp185. Residues 126-257 form an I-domain region; that stretch reads LMEKMSKRTV…QKAWEGIKKH (132 aa). Glu162 is a binding site for DNA. 2 residues coordinate DNA: Gly235 and Asp237. Asp237 is a binding site for Mg(2+). An interaction with PCNA region spans residues 340–348; that stretch reads TQGRLDQFF.

The protein belongs to the XPG/RAD2 endonuclease family. FEN1 subfamily. As to quaternary structure, interacts with PCNA. Three molecules of FEN1 bind to one PCNA trimer with each molecule binding to one PCNA monomer. PCNA stimulates the nuclease activity without altering cleavage specificity. Mg(2+) is required as a cofactor. Post-translationally, phosphorylated. Phosphorylation upon DNA damage induces relocalization to the nuclear plasma.

It localises to the nucleus. The protein localises to the nucleolus. It is found in the nucleoplasm. Its subcellular location is the mitochondrion. Its function is as follows. Structure-specific nuclease with 5'-flap endonuclease and 5'-3' exonuclease activities involved in DNA replication and repair. During DNA replication, cleaves the 5'-overhanging flap structure that is generated by displacement synthesis when DNA polymerase encounters the 5'-end of a downstream Okazaki fragment. It enters the flap from the 5'-end and then tracks to cleave the flap base, leaving a nick for ligation. Also involved in the long patch base excision repair (LP-BER) pathway, by cleaving within the apurinic/apyrimidinic (AP) site-terminated flap. Acts as a genome stabilization factor that prevents flaps from equilibrating into structures that lead to duplications and deletions. Also possesses 5'-3' exonuclease activity on nicked or gapped double-stranded DNA, and exhibits RNase H activity. Also involved in replication and repair of rDNA and in repairing mitochondrial DNA. In Trypanosoma cruzi (strain CL Brener), this protein is Flap endonuclease 1.